A 448-amino-acid polypeptide reads, in one-letter code: Probable glycine dehydrogenase (decarboxylating) subunit 1 (448 aa).

It belongs to the GcvP family. N-terminal subunit subfamily. As to quaternary structure, the glycine cleavage system is composed of four proteins: P, T, L and H. In this organism, the P 'protein' is a heterodimer of two subunits.

It carries out the reaction N(6)-[(R)-lipoyl]-L-lysyl-[glycine-cleavage complex H protein] + glycine + H(+) = N(6)-[(R)-S(8)-aminomethyldihydrolipoyl]-L-lysyl-[glycine-cleavage complex H protein] + CO2. In terms of biological role, the glycine cleavage system catalyzes the degradation of glycine. The P protein binds the alpha-amino group of glycine through its pyridoxal phosphate cofactor; CO(2) is released and the remaining methylamine moiety is then transferred to the lipoamide cofactor of the H protein. In Parvibaculum lavamentivorans (strain DS-1 / DSM 13023 / NCIMB 13966), this protein is Probable glycine dehydrogenase (decarboxylating) subunit 1.